A 55-amino-acid polypeptide reads, in one-letter code: Large ribosomal subunit protein bL33 (55 aa).

It belongs to the bacterial ribosomal protein bL33 family.

In Bartonella henselae (strain ATCC 49882 / DSM 28221 / CCUG 30454 / Houston 1) (Rochalimaea henselae), this protein is Large ribosomal subunit protein bL33.